We begin with the raw amino-acid sequence, 288 residues long: Glycine--tRNA ligase alpha subunit (288 aa).

This sequence belongs to the class-II aminoacyl-tRNA synthetase family. Tetramer of two alpha and two beta subunits.

The protein localises to the cytoplasm. It carries out the reaction tRNA(Gly) + glycine + ATP = glycyl-tRNA(Gly) + AMP + diphosphate. The chain is Glycine--tRNA ligase alpha subunit from Desulfatibacillum aliphaticivorans.